The chain runs to 305 residues: Glycine--tRNA ligase alpha subunit (305 aa).

The protein belongs to the class-II aminoacyl-tRNA synthetase family. As to quaternary structure, tetramer of two alpha and two beta subunits.

The protein localises to the cytoplasm. The enzyme catalyses tRNA(Gly) + glycine + ATP = glycyl-tRNA(Gly) + AMP + diphosphate. The chain is Glycine--tRNA ligase alpha subunit from Streptococcus mutans serotype c (strain ATCC 700610 / UA159).